A 289-amino-acid chain; its full sequence is 4-diphosphocytidyl-2-C-methyl-D-erythritol kinase (289 aa).

The active site involves Lys-10. Position 94-104 (94-104 (PVAAGLAGGSS)) interacts with ATP. The active site involves Asp-136.

Belongs to the GHMP kinase family. IspE subfamily.

It catalyses the reaction 4-CDP-2-C-methyl-D-erythritol + ATP = 4-CDP-2-C-methyl-D-erythritol 2-phosphate + ADP + H(+). The protein operates within isoprenoid biosynthesis; isopentenyl diphosphate biosynthesis via DXP pathway; isopentenyl diphosphate from 1-deoxy-D-xylulose 5-phosphate: step 3/6. Its function is as follows. Catalyzes the phosphorylation of the position 2 hydroxy group of 4-diphosphocytidyl-2C-methyl-D-erythritol. This Bacillus velezensis (strain DSM 23117 / BGSC 10A6 / LMG 26770 / FZB42) (Bacillus amyloliquefaciens subsp. plantarum) protein is 4-diphosphocytidyl-2-C-methyl-D-erythritol kinase.